We begin with the raw amino-acid sequence, 261 residues long: uncharacterized protein (261 aa).

This is an uncharacterized protein from Haemophilus influenzae (strain ATCC 51907 / DSM 11121 / KW20 / Rd).